The sequence spans 231 residues: S-norcoclaurine synthase 1 (231 aa).

107-109 (YKE) contacts dopamine. The active-site Proton donor is K121. D140 lines the (4-hydroxyphenyl)acetaldehyde pocket. The chain crosses the membrane as a helical span at residues 210 to 230 (LLLCLIICLVIAGGMFVAGVP).

The protein belongs to the BetVI family. Detected in roots, stems, leaves, flower buds and germinating seeds.

The protein resides in the membrane. The catalysed reaction is (4-hydroxyphenyl)acetaldehyde + dopamine = (S)-norcoclaurine + H2O. The protein operates within alkaloid biosynthesis; (S)-reticuline biosynthesis. Its activity is regulated as follows. Activity doubles within 5 hours of elicitor treatment and continues to increase for at least 80 hours. Functionally, involved in the biosynthesis of (S)-coclaurine, the common precursor of all benzylisoquinoline alkaloids such as morphine, sanguinarine, codeine or papaverine. Condenses dopamine and 4-hydroxyphenylacetaldehyde. The chain is S-norcoclaurine synthase 1 from Papaver somniferum (Opium poppy).